A 490-amino-acid polypeptide reads, in one-letter code: Cytochrome P450 2C1 (490 aa).

Cysteine 435 contacts heme.

Belongs to the cytochrome P450 family. Heme is required as a cofactor.

Its subcellular location is the endoplasmic reticulum membrane. The protein resides in the microsome membrane. The catalysed reaction is an organic molecule + reduced [NADPH--hemoprotein reductase] + O2 = an alcohol + oxidized [NADPH--hemoprotein reductase] + H2O + H(+). Cytochromes P450 are a group of heme-thiolate monooxygenases. In liver microsomes, this enzyme is involved in an NADPH-dependent electron transport pathway. It oxidizes a variety of structurally unrelated compounds, including steroids, fatty acids, and xenobiotics. This Oryctolagus cuniculus (Rabbit) protein is Cytochrome P450 2C1 (CYP2C1).